A 276-amino-acid polypeptide reads, in one-letter code: Octanoyltransferase LipM (276 aa).

The BPL/LPL catalytic domain occupies 31–246 (GLIPPVIRFY…GFAKSLQIEL (216 aa)). The Acyl-thioester intermediate role is filled by C148.

Belongs to the octanoyltransferase LipM family. As to quaternary structure, monomer.

The catalysed reaction is octanoyl-[ACP] + L-lysyl-[protein] = N(6)-octanoyl-L-lysyl-[protein] + holo-[ACP] + H(+). Its pathway is protein modification; protein lipoylation via endogenous pathway; protein N(6)-(lipoyl)lysine from octanoyl-[acyl-carrier-protein]. Functionally, catalyzes the transfer of endogenously produced octanoic acid from octanoyl-acyl-carrier-protein onto the lipoyl domain of GcvH, an intermediate carrier during protein lipoylation. The polypeptide is Octanoyltransferase LipM (Lysinibacillus sphaericus (strain C3-41)).